The chain runs to 362 residues: Aspartate-semialdehyde dehydrogenase (362 aa).

8 residues coordinate NADP(+): Thr-15, Gly-16, Ala-17, Val-18, Ser-40, Ser-43, Leu-87, and Asp-88. Catalysis depends on Cys-154, which acts as the Acyl-thioester intermediate. Gly-186 provides a ligand contact to NADP(+). His-251 serves as the catalytic Proton acceptor. Asn-340 contacts NADP(+).

The protein belongs to the aspartate-semialdehyde dehydrogenase family. Homotetramer; dimer of dimers.

The protein localises to the cytoplasm. It localises to the cytosol. It is found in the nucleus. The enzyme catalyses L-aspartate 4-semialdehyde + phosphate + NADP(+) = 4-phospho-L-aspartate + NADPH + H(+). It participates in amino-acid biosynthesis; L-methionine biosynthesis via de novo pathway; L-homoserine from L-aspartate: step 2/3. Its pathway is amino-acid biosynthesis; L-threonine biosynthesis; L-threonine from L-aspartate: step 2/5. Catalyzes the NADPH-dependent formation of L-aspartate 4-semialdehyde (L-ASA) by the reductive dephosphorylation of 4-phospho-L-aspartate. Mediates the second step in the biosynthesis of amino acids that derive from aspartate (the aspartate family of amino acids), including methioinine and threonine, the latter of which is a precursor to isoleucine. The protein is Aspartate-semialdehyde dehydrogenase of Trichophyton rubrum (strain ATCC MYA-4607 / CBS 118892) (Athlete's foot fungus).